A 749-amino-acid polypeptide reads, in one-letter code: 5-methyltetrahydropteroyltriglutamate--homocysteine methyltransferase (749 aa).

Residues 15 to 18 (RELK) and lysine 114 contribute to the 5-methyltetrahydropteroyltri-L-glutamate site. L-homocysteine contacts are provided by residues 425–427 (IGS) and glutamate 478. L-methionine contacts are provided by residues 425 to 427 (IGS) and glutamate 478. Tryptophan 555 contributes to the 5-methyltetrahydropteroyltri-L-glutamate binding site. Residue aspartate 593 participates in L-homocysteine binding. Aspartate 593 is an L-methionine binding site. A 5-methyltetrahydropteroyltri-L-glutamate-binding site is contributed by glutamate 599. Residues histidine 636, cysteine 638, and glutamate 660 each coordinate Zn(2+). The active-site Proton donor is histidine 689. Cysteine 721 contributes to the Zn(2+) binding site.

Belongs to the vitamin-B12 independent methionine synthase family. Zn(2+) serves as cofactor.

It carries out the reaction 5-methyltetrahydropteroyltri-L-glutamate + L-homocysteine = tetrahydropteroyltri-L-glutamate + L-methionine. It participates in amino-acid biosynthesis; L-methionine biosynthesis via de novo pathway; L-methionine from L-homocysteine (MetE route): step 1/1. Its function is as follows. Catalyzes the transfer of a methyl group from 5-methyltetrahydrofolate to homocysteine resulting in methionine formation. The polypeptide is 5-methyltetrahydropteroyltriglutamate--homocysteine methyltransferase (Streptococcus thermophilus (strain ATCC BAA-491 / LMD-9)).